Reading from the N-terminus, the 268-residue chain is Tryptophan synthase alpha chain (268 aa).

Residues Glu49 and Asp60 each act as proton acceptor in the active site.

Belongs to the TrpA family. As to quaternary structure, tetramer of two alpha and two beta chains.

It catalyses the reaction (1S,2R)-1-C-(indol-3-yl)glycerol 3-phosphate + L-serine = D-glyceraldehyde 3-phosphate + L-tryptophan + H2O. It participates in amino-acid biosynthesis; L-tryptophan biosynthesis; L-tryptophan from chorismate: step 5/5. The alpha subunit is responsible for the aldol cleavage of indoleglycerol phosphate to indole and glyceraldehyde 3-phosphate. The protein is Tryptophan synthase alpha chain of Salmonella agona (strain SL483).